The chain runs to 910 residues: MTNERKEVSEAPVNFGANLGLMLDLYDDFLQDPSSVPEDLQVLFSTIKRVMRLIDNIRQYGHLKADIYPVNPPKRKHVPKLEIEDFDLDQQTLEGISAGIVSDHFADIYDNAYEAILRMEKRYKGPIAFEYTHINNNTERGWLKRRIETPYKVTLNNNEKRALFKQLAYVEGFEKYLHKNFVGAKRFSIEGVDALVPMLQRTITIAAKEGIKNIQIGMAHRGRLNVLTHVLEKPYEMMISEFMHTDPMKFLPEDGSLQLTAGWTGDVKYHLGGIKTTDSYGTMQRIALANNPSHLEIVAPVVEGRTRAAQDDTQRAGAPTTDHHKAMPIIIHGDAAYPGQGINFETMNLGNLKGYSTGGSLHIITNNRIGFTTEPIDARSTTYSTDVAKGYDVPIFHVNADDVEATIEAIDIAMEFRKEFHKDVVIDLVGYRRFGHNEMDEPSITNPVPYQNIRKHDSVEYVFGKKLVNEGVISEDEMHSFIEQVQKELRQAHDKINKADKMDNPDMEKPAELALPLQADEQSFTFDHLKEINDALLTYPDGFNILKKLNKVLEKRHEPFNKEDGLVDWAQAEQLAFATILQDGTPIRLTGQDSERGTFSHRHAVLHDEQTGETYTPLHHVPDQKATFDIHNSPLSEAAVVGFEYGYNVENKKSFNIWEAQYGDFANMSQMIFDNFLFSSRSKWGERSGLTLFLPHAYEGQGPEHSSARLERFLQLAAENNCTVVNLSSSSNYFHLLRAQAASLDSEQMRPLVVMSPKSLLRNKTVAKPIDEFTSGGFEPILTESYQADKVTKVILATGKMFIDLKEALAKNPDESVLLVAIERLYPFPEEEIEALLAQLPKLEEVSWVQEEPKNQGAWLYVYPYVKVLVADKYDLSYHGRIQRAAPAEGDGEIHKLVQNKIIENALKNN.

This sequence belongs to the alpha-ketoglutarate dehydrogenase family. Homodimer. Part of the 2-oxoglutarate dehydrogenase (OGDH) complex composed of E1 (2-oxoglutarate dehydrogenase), E2 (dihydrolipoamide succinyltransferase) and E3 (dihydrolipoamide dehydrogenase); the complex contains multiple copies of the three enzymatic components (E1, E2 and E3). Thiamine diphosphate serves as cofactor.

It carries out the reaction N(6)-[(R)-lipoyl]-L-lysyl-[protein] + 2-oxoglutarate + H(+) = N(6)-[(R)-S(8)-succinyldihydrolipoyl]-L-lysyl-[protein] + CO2. E1 component of the 2-oxoglutarate dehydrogenase (OGDH) complex which catalyzes the decarboxylation of 2-oxoglutarate, the first step in the conversion of 2-oxoglutarate to succinyl-CoA and CO(2). The sequence is that of 2-oxoglutarate dehydrogenase E1 component from Staphylococcus aureus (strain N315).